The sequence spans 464 residues: Lysosomal dipeptide transporter MFSD1 (464 aa).

The Dileucine internalization motif signature appears at 11–12 (LL). Residue S20 is modified to Phosphoserine. Helical transmembrane passes span 38-58 (LAHRLVVLSLMCFLGFGSYFC), 82-102 (LLYAWYSWPNVVLCFLGGFLI), 112-132 (TVIFSCFVCIGQVIFALGGIF), 134-154 (AFWLMELGRFVFGIGGESLAV), 190-210 (LMGWLYGKIEALLGSAGHMTL), 214-234 (LMIGCITCIFSLICALALAYL), 265-285 (LILVFVICVCYYVAVFPFIGL), 303-323 (AINSIVYIISAPMSPLFGLLV), 330-350 (IIWVLYAVAATLVSHMMLAFT), 360-380 (LLGFSYSLLACALWPMVAFIV), 391-411 (FMQSIQNLGLAVIAILAGMIL), and 417-437 (LLLEVFFIACVSLSLLAVVCL).

Belongs to the major facilitator superfamily. In terms of assembly, homodimer. Interacts with lysosomal protein GLMP (via lumenal domain); the interaction starts while both proteins are still in the endoplasmic reticulum and is required for stabilization of MFSD1 in lysosomes but has no direct effect on its targeting to lysosomes or transporter activity. In terms of processing, not N-glycosylated. In brain, expressed in the cortex, striatum hippocampus, hypothalamus, thalamus and brainstem (at protein level). Widely expressed with highest levels in kidney and spleen (at protein level).

Its subcellular location is the lysosome membrane. The enzyme catalyses L-alpha-aminoacyl-L-arginine(out) = L-alpha-aminoacyl-L-arginine(in). The catalysed reaction is L-arginyl-L-alpha-amino acid(out) = L-arginyl-L-alpha-amino acid(in). It carries out the reaction L-arginyl-glycine(out) = L-arginyl-glycine(in). It catalyses the reaction L-alpha-aminoacyl-L-lysine(out) = L-alpha-aminoacyl-L-lysine(in). The enzyme catalyses L-aspartyl-L-lysine(out) = L-aspartyl-L-lysine(in). The catalysed reaction is L-alanyl-L-lysine(out) = L-alanyl-L-lysine(in). It carries out the reaction L-lysyl-L-alpha-amino acid(out) = L-lysyl-L-alpha-amino acid(in). It catalyses the reaction L-lysyl-L-alanine(out) = L-lysyl-L-alanine(in). The enzyme catalyses L-lysyl-L-lysine(out) = L-lysyl-L-lysine(in). The catalysed reaction is L-lysyl-glycine(out) = L-lysyl-glycine(in). It carries out the reaction L-alpha-aminoacyl-L-histidine(out) = L-alpha-aminoacyl-L-histidine(in). It catalyses the reaction L-histidyl-L-alpha-amino acid(out) = L-histidyl-L-alpha-amino acid(in). The enzyme catalyses L-histidyl-glycine(out) = L-histidyl-glycine(in). Functionally, lysosomal dipeptide uniporter that selectively exports lysine, arginine or histidine-containing dipeptides with a net positive charge from the lysosome lumen into the cytosol. Could play a role in a specific type of protein O-glycosylation indirectly regulating macrophages migration and tissue invasion. Also essential for liver homeostasis. The sequence is that of Lysosomal dipeptide transporter MFSD1 from Mus musculus (Mouse).